The following is a 155-amino-acid chain: UPF0178 protein RPC_3085 (155 aa).

Belongs to the UPF0178 family.

The polypeptide is UPF0178 protein RPC_3085 (Rhodopseudomonas palustris (strain BisB18)).